The chain runs to 89 residues: MVDRKAVIKNADMSDDMQQDAIDCATQALEKYNIEKDIAAYIKKEFDKKYNPTWHCIVGRNFGSYVTHETKHFIYFYLGQVAILLFKSG.

It belongs to the dynein light chain family. Interacts with mett-10; the interaction is direct, and is required for the nuclear localization of mett-10. Component of a dynein-regulating complex composed of at least bicd-1, dlc-1 and egal-1. Interacts with egal-1 and unc-83. Interacts with fbf-2. As to expression, broadly expressed in tissues including the intestine, body wall muscles, germs cells, oocytes, the rectal valve and cells in the head.

The protein localises to the cytoplasm. It is found in the cytoskeleton. Its subcellular location is the nucleus envelope. The protein resides in the cytoplasmic granule. Its function is as follows. Acts as a non-catalytic accessory component of a dynein complex. Part of a complex with bicd-1 and egal-1, which is recruited to the nuclear envelope by unc-83, where in turn, it recruits dynein to the nuclear surface and regulates nuclear migrations in hypodermal precursor cells. Probably within a dynein motor complex, plays a role in the cell fate specification of the germline and oogenesis. In particular, it inhibits germ cell proliferation. Regulates the function and localization of the RNA-binding protein fbf-2 in the germline. Plays a role in mitotic and meiotic processes. Involved in the pairing of homologous chromosomes. Independently of its dynein-mediated functions, plays a role in germ cell apoptosis. This chain is Dynein light chain 1, cytoplasmic, found in Caenorhabditis elegans.